We begin with the raw amino-acid sequence, 89 residues long: Small ribosomal subunit protein uS15 (89 aa).

It belongs to the universal ribosomal protein uS15 family. As to quaternary structure, part of the 30S ribosomal subunit. Forms a bridge to the 50S subunit in the 70S ribosome, contacting the 23S rRNA.

One of the primary rRNA binding proteins, it binds directly to 16S rRNA where it helps nucleate assembly of the platform of the 30S subunit by binding and bridging several RNA helices of the 16S rRNA. In terms of biological role, forms an intersubunit bridge (bridge B4) with the 23S rRNA of the 50S subunit in the ribosome. The protein is Small ribosomal subunit protein uS15 of Trichodesmium erythraeum (strain IMS101).